Here is an 83-residue protein sequence, read N- to C-terminus: MPVIESAIQRVRLTKKQHDRNEPQLSAYRTAVKKFEKAAAAGTDNLAELYKAASSAIDHAYSKGLIKKNKASREKSRLAKYVK.

The protein belongs to the bacterial ribosomal protein bS20 family.

Binds directly to 16S ribosomal RNA. The chain is Small ribosomal subunit protein bS20 from Leuconostoc mesenteroides subsp. mesenteroides (strain ATCC 8293 / DSM 20343 / BCRC 11652 / CCM 1803 / JCM 6124 / NCDO 523 / NBRC 100496 / NCIMB 8023 / NCTC 12954 / NRRL B-1118 / 37Y).